The following is a 138-amino-acid chain: MRHYEIIFLVHPDQSEQVGGMVERYTKLIEEDGGKIHRLEDWGRRQLAYAINNVHKAHYVMLNVECSGKALAELEDNFRYNDAVIRNLIIRRDEAVTEQSEMLKAEENRSERRERRDRPDNTDGSNENDSDSDNNADE.

Residues 97 to 121 (TEQSEMLKAEENRSERRERRDRPDN) show a composition bias toward basic and acidic residues. The disordered stretch occupies residues 97-138 (TEQSEMLKAEENRSERRERRDRPDNTDGSNENDSDSDNNADE). Residues 126 to 138 (NENDSDSDNNADE) are compositionally biased toward acidic residues.

This sequence belongs to the bacterial ribosomal protein bS6 family.

Binds together with bS18 to 16S ribosomal RNA. The chain is Small ribosomal subunit protein bS6 from Stutzerimonas stutzeri (strain A1501) (Pseudomonas stutzeri).